We begin with the raw amino-acid sequence, 496 residues long: Lysine--tRNA ligase (496 aa).

Mg(2+)-binding residues include glutamate 409 and glutamate 416.

Belongs to the class-II aminoacyl-tRNA synthetase family. As to quaternary structure, homodimer. Mg(2+) is required as a cofactor.

It localises to the cytoplasm. The enzyme catalyses tRNA(Lys) + L-lysine + ATP = L-lysyl-tRNA(Lys) + AMP + diphosphate. The chain is Lysine--tRNA ligase from Streptococcus pneumoniae (strain CGSP14).